A 716-amino-acid polypeptide reads, in one-letter code: Exocyst complex component 8 (716 aa).

At Ser15 the chain carries Phosphoserine. The disordered stretch occupies residues 129-150 (GFLPGPAGVPREGSGTGEEGKQ). The PH domain occupies 173-273 (YLVYNGDLVE…WLEVLEETKR (101 aa)). Basic and acidic residues predominate over residues 275 to 284 (LSDKRRREQE). Residues 275–319 (LSDKRRREQEEAAAPRAPPPVTSKGSNPFEDEDDEELATPEAEEE) are disordered. Acidic residues predominate over residues 303–319 (FEDEDDEELATPEAEEE). At Thr313 the chain carries Phosphothreonine.

It belongs to the EXO84 family. As to quaternary structure, the exocyst complex is composed of EXOC1, EXOC2, EXOC3, EXOC4, EXOC5, EXOC6, EXOC7 and EXOC8. Interacts (via PH domain) with GTP-bound RALA and RALB. Interacts with SH3BP1; required for the localization of both SH3BP1 and the exocyst to the leading edge of migrating cells.

Its subcellular location is the cytoplasm. It localises to the perinuclear region. The protein localises to the cell projection. It is found in the growth cone. In terms of biological role, component of the exocyst complex involved in the docking of exocytic vesicles with fusion sites on the plasma membrane. The protein is Exocyst complex component 8 (Exoc8) of Mus musculus (Mouse).